The chain runs to 139 residues: Transcription antitermination protein NusB (139 aa).

This sequence belongs to the NusB family.

In terms of biological role, involved in transcription antitermination. Required for transcription of ribosomal RNA (rRNA) genes. Binds specifically to the boxA antiterminator sequence of the ribosomal RNA (rrn) operons. The sequence is that of Transcription antitermination protein NusB from Sodalis glossinidius (strain morsitans).